The primary structure comprises 355 residues: Alanine racemase (355 aa).

The Proton acceptor; specific for D-alanine role is filled by lysine 34. At lysine 34 the chain carries N6-(pyridoxal phosphate)lysine. Arginine 133 provides a ligand contact to substrate. The Proton acceptor; specific for L-alanine role is filled by tyrosine 249. Residue methionine 297 coordinates substrate.

It belongs to the alanine racemase family. The cofactor is pyridoxal 5'-phosphate.

It catalyses the reaction L-alanine = D-alanine. It participates in amino-acid biosynthesis; D-alanine biosynthesis; D-alanine from L-alanine: step 1/1. Catalyzes the interconversion of L-alanine and D-alanine. May also act on other amino acids. In Rickettsia canadensis (strain McKiel), this protein is Alanine racemase (alr).